Here is a 69-residue protein sequence, read N- to C-terminus: Alpha-elapitoxin-Lc2c (69 aa).

4 cysteine pairs are disulfide-bonded: Cys-3–Cys-20, Cys-13–Cys-41, Cys-45–Cys-56, and Cys-57–Cys-62.

It belongs to the three-finger toxin family. Long-chain subfamily. Type II alpha-neurotoxin sub-subfamily. As to expression, expressed by the venom gland.

The protein localises to the secreted. Functionally, binds with high affinity to muscular nicotinic acetylcholine receptors (nAChRs), whereas it binds with a low affinity to neuronal alpha-7/CHRNA7 nAChRs. The polypeptide is Alpha-elapitoxin-Lc2c (Laticauda colubrina (Yellow-lipped sea krait)).